The following is a 391-amino-acid chain: Phosphoglycerate kinase (391 aa).

Residues 21–23, R36, 59–62, R113, and R146 each bind substrate; these read DLN and HLGR. ATP contacts are provided by residues K197, E319, and 345–348; that span reads GGDT.

This sequence belongs to the phosphoglycerate kinase family. Monomer.

It is found in the cytoplasm. It catalyses the reaction (2R)-3-phosphoglycerate + ATP = (2R)-3-phospho-glyceroyl phosphate + ADP. It participates in carbohydrate degradation; glycolysis; pyruvate from D-glyceraldehyde 3-phosphate: step 2/5. In Xanthomonas euvesicatoria pv. vesicatoria (strain 85-10) (Xanthomonas campestris pv. vesicatoria), this protein is Phosphoglycerate kinase.